We begin with the raw amino-acid sequence, 256 residues long: Proteasome subunit alpha-type 8 (256 aa).

This sequence belongs to the peptidase T1A family. In terms of assembly, component of the outer alpha-ring of the 20S proteasome core which is composed of 28 subunits that are arranged in four stacked rings, resulting in a barrel-shaped structure. The catalytic chamber with the active sites is on the inside of the barrel. Interacts with canonical subunits of the spermatoproteasome, including proteasome activators PSME4 (also called PA200) and PSME3 (also called PA28-gamma). Interacts with proteasome-interacting proteins chaperones, ubiquitin ligases and ubiquitin specific proteases. Interacts with meiotic proteins cyclin dependent kinase CDK1 and the ATPase TRIP13 as well as proteins of the synaptonemal complex SIX6OS1 and SYCE3.

The protein localises to the nucleus. Functionally, component of the spermatoproteasome, a proteasome specifically found in testis that promotes acetylation-dependent degradation of histones, thereby participating actively to the exchange of histones during spermatogenesis. The proteasome is a protein complex that degrades unneeded or damaged proteins by proteolysis, a chemical reaction that breaks peptide bonds. Required for 20S core proteasome assembly, essential for the degradation of meiotic proteins RAD51 and RPA1 at late prophase I and the progression of meiosis I during spermatogenesis. Localizes to the synaptonemal complex, a 'zipper'-like structure that holds homologous chromosome pairs in synapsis during meiotic prophase I. The protein is Proteasome subunit alpha-type 8 (PSMA8) of Homo sapiens (Human).